Here is a 196-residue protein sequence, read N- to C-terminus: Probable malonic semialdehyde reductase RutE (196 aa).

It belongs to the nitroreductase family. HadB/RutE subfamily. The cofactor is FMN.

It carries out the reaction 3-hydroxypropanoate + NADP(+) = 3-oxopropanoate + NADPH + H(+). May reduce toxic product malonic semialdehyde to 3-hydroxypropionic acid, which is excreted. This chain is Probable malonic semialdehyde reductase RutE, found in Enterobacter sp. (strain 638).